The primary structure comprises 704 residues: Polyribonucleotide nucleotidyltransferase (704 aa).

2 residues coordinate Mg(2+): D485 and D491. The 60-residue stretch at 552–611 (PRIYTMKIDPKKIKDVIGKGGATIRALTEETGTSIDIDDDGTVKIAAVDGNAVKTVMARI) folds into the KH domain. The region spanning 621–689 (GAVYTGKVTR…RQGRIRLTMR (69 aa)) is the S1 motif domain.

The protein belongs to the polyribonucleotide nucleotidyltransferase family. Component of the RNA degradosome, which is a multiprotein complex involved in RNA processing and mRNA degradation. It depends on Mg(2+) as a cofactor.

It is found in the cytoplasm. It carries out the reaction RNA(n+1) + phosphate = RNA(n) + a ribonucleoside 5'-diphosphate. In terms of biological role, involved in mRNA degradation. Catalyzes the phosphorolysis of single-stranded polyribonucleotides processively in the 3'- to 5'-direction. The protein is Polyribonucleotide nucleotidyltransferase of Mannheimia succiniciproducens (strain KCTC 0769BP / MBEL55E).